The chain runs to 373 residues: SH3 domain-binding protein 5-like (373 aa).

Residues methionine 1–serine 36 are disordered. 2 coiled-coil regions span residues alanine 35–arginine 98 and tryptophan 170–tyrosine 258. 2 disordered regions span residues alanine 274–threonine 308 and aspartate 332–leucine 373. The span at aspartate 332–glycine 360 shows a compositional bias: basic and acidic residues.

Belongs to the SH3BP5 family.

Functionally, functions as a guanine nucleotide exchange factor (GEF) for rab11a. This chain is SH3 domain-binding protein 5-like (sh3bp5l), found in Xenopus laevis (African clawed frog).